The primary structure comprises 521 residues: Glutamate--cysteine ligase (521 aa).

It belongs to the glutamate--cysteine ligase type 1 family. Type 1 subfamily.

The enzyme catalyses L-cysteine + L-glutamate + ATP = gamma-L-glutamyl-L-cysteine + ADP + phosphate + H(+). It functions in the pathway sulfur metabolism; glutathione biosynthesis; glutathione from L-cysteine and L-glutamate: step 1/2. This is Glutamate--cysteine ligase (gshA) from Buchnera aphidicola subsp. Baizongia pistaciae (strain Bp).